The following is a 237-amino-acid chain: Ribonuclease PH (237 aa).

Residues Arg-86 and 124–126 (GTR) contribute to the phosphate site.

This sequence belongs to the RNase PH family. In terms of assembly, homohexameric ring arranged as a trimer of dimers.

The catalysed reaction is tRNA(n+1) + phosphate = tRNA(n) + a ribonucleoside 5'-diphosphate. In terms of biological role, phosphorolytic 3'-5' exoribonuclease that plays an important role in tRNA 3'-end maturation. Removes nucleotide residues following the 3'-CCA terminus of tRNAs; can also add nucleotides to the ends of RNA molecules by using nucleoside diphosphates as substrates, but this may not be physiologically important. Probably plays a role in initiation of 16S rRNA degradation (leading to ribosome degradation) during starvation. The sequence is that of Ribonuclease PH from Methylorubrum extorquens (strain CM4 / NCIMB 13688) (Methylobacterium extorquens).